Reading from the N-terminus, the 45-residue chain is Peroxidase 3 (45 aa).

It belongs to the peroxidase family. Classical plant (class III) peroxidase subfamily. Requires heme b as cofactor. The cofactor is Ca(2+).

The protein localises to the secreted. It catalyses the reaction 2 a phenolic donor + H2O2 = 2 a phenolic radical donor + 2 H2O. Its function is as follows. Removal of H(2)O(2), oxidation of toxic reductants, biosynthesis and degradation of lignin, suberization, auxin catabolism, response to environmental stresses such as wounding, pathogen attack and oxidative stress. These functions might be dependent on each isozyme/isoform in each plant tissue. This Capsicum annuum (Capsicum pepper) protein is Peroxidase 3.